Consider the following 238-residue polypeptide: dITP/XTP pyrophosphatase (238 aa).

7-12 (SANQHK) is a substrate binding site. Residue D89 is the Proton acceptor of the active site. D89 contacts Mg(2+). Substrate is bound by residues S90, 191-194 (FGYD), K217, and 222-223 (HR).

Belongs to the HAM1 NTPase family. As to quaternary structure, homodimer. Mg(2+) is required as a cofactor.

The catalysed reaction is XTP + H2O = XMP + diphosphate + H(+). It carries out the reaction dITP + H2O = dIMP + diphosphate + H(+). The enzyme catalyses ITP + H2O = IMP + diphosphate + H(+). In terms of biological role, pyrophosphatase that catalyzes the hydrolysis of nucleoside triphosphates to their monophosphate derivatives, with a high preference for the non-canonical purine nucleotides XTP (xanthosine triphosphate), dITP (deoxyinosine triphosphate) and ITP. Seems to function as a house-cleaning enzyme that removes non-canonical purine nucleotides from the nucleotide pool, thus preventing their incorporation into DNA/RNA and avoiding chromosomal lesions. The chain is dITP/XTP pyrophosphatase from Helicobacter hepaticus (strain ATCC 51449 / 3B1).